A 108-amino-acid chain; its full sequence is uncharacterized protein (108 aa).

Cystine bridges form between Cys-44/Cys-82, Cys-60/Cys-78, and Cys-63/Cys-91.

This sequence belongs to the arthropod CHH/MIH/GIH/VIH hormone family.

This is an uncharacterized protein from Caenorhabditis elegans.